Reading from the N-terminus, the 227-residue chain is Nitrobenzene nitroreductase (227 aa).

14 to 18 (RRAKR) provides a ligand contact to FMN. Residues serine 44 and isoleucine 109 each contribute to the NADP(+) site. Residues 172-173 (VF) and lysine 215 contribute to the FMN site.

It belongs to the nitroreductase family. As to quaternary structure, monomer. Requires FMN as cofactor.

The enzyme catalyses N-phenylhydroxylamine + 2 NADP(+) + H2O = nitrobenzene + 2 NADPH + 2 H(+). Its pathway is xenobiotic degradation; nitrobenzene degradation. Inhibited by dicumarol, p-hydroxymercuribenzoate and salicyl hydroxamate. Its function is as follows. Involved in the biodegradation of nitroaromatic compounds. Catalyzes the two-electron reduction of nitrobenzene (NB) to produce a nitrosobenzene (NOB) intermediate, which is immediately reduced to hydroxylaminobenzene (HAB) by a second two-electron transfer. Also active on menadione and nitrofurazone. Replacing NADPH with NADH results in a 4-fold decrease in the reaction rate. The polypeptide is Nitrobenzene nitroreductase (Ectopseudomonas oleovorans (Pseudomonas oleovorans)).